Reading from the N-terminus, the 417-residue chain is MDFAPELITIGQKAKDAARKLAYAGTAAKNKALLAMAEALLNHEQKILEANRKDVEAAIQKGTKKSLVNRLALTSEGIRQMSDALKEVVNLGDPVGEGEFWTRPNGLRIQRTRVPLGVVAMIYEARPNVTVDAAALCLKSGNAVILRGGSEAIESNKILSKVIAGAAESQGMPTACIQLLENTNRQWVQQLMKMNGYVDVIIPRGGAGLIETVVKEATVPVIETGTGVCHAYVDGEADLAKGVSIVFNAKTQKPGVCNALEAVLVNEAVAQEFLPLLGEKFRDYGVEIRGCEKTCAILPYAAKATEEDWGTEYLDLIISAKVVQGVDEAMDHIYQYGTKHSETIITENYTTAQRFLNEVDAAAVYVNASTRFTDGGRFGFGAEIGISTQKLHARGPMGLQALTTMKYMVYGEDHIVT.

It belongs to the gamma-glutamyl phosphate reductase family.

Its subcellular location is the cytoplasm. The enzyme catalyses L-glutamate 5-semialdehyde + phosphate + NADP(+) = L-glutamyl 5-phosphate + NADPH + H(+). It functions in the pathway amino-acid biosynthesis; L-proline biosynthesis; L-glutamate 5-semialdehyde from L-glutamate: step 2/2. Catalyzes the NADPH-dependent reduction of L-glutamate 5-phosphate into L-glutamate 5-semialdehyde and phosphate. The product spontaneously undergoes cyclization to form 1-pyrroline-5-carboxylate. The protein is Gamma-glutamyl phosphate reductase of Desulfitobacterium hafniense (strain Y51).